Here is a 167-residue protein sequence, read N- to C-terminus: Small ribosomal subunit protein mS25 (167 aa).

Belongs to the mitochondrion-specific ribosomal protein mS25 family. As to quaternary structure, component of the mitochondrial ribosome small subunit (28S) which comprises a 12S rRNA and about 30 distinct proteins.

The protein resides in the mitochondrion. The protein is Small ribosomal subunit protein mS25 (mRpS25) of Drosophila melanogaster (Fruit fly).